A 545-amino-acid polypeptide reads, in one-letter code: CTP synthase (545 aa).

The amidoligase domain stretch occupies residues 1–266; it reads MTTNYIFVTG…DDYICKRFGL (266 aa). Residue S14 coordinates CTP. S14 contacts UTP. Residues 15-20 and D72 each bind ATP; that span reads SLGKGI. Positions 72 and 140 each coordinate Mg(2+). CTP is bound by residues 147–149, 187–192, and K223; these read DIE and KTKPTQ. Residues 187–192 and K223 each bind UTP; that span reads KTKPTQ. 239 to 241 serves as a coordination point for ATP; it reads KDV. The Glutamine amidotransferase type-1 domain occupies 291-542; that stretch reads TIGMVGKYIA…VKAAGEYQKR (252 aa). L-glutamine is bound at residue G352. The Nucleophile; for glutamine hydrolysis role is filled by C379. L-glutamine is bound by residues 380–383, E403, and R470; that span reads LGMQ. Catalysis depends on residues H515 and E517.

The protein belongs to the CTP synthase family. In terms of assembly, homotetramer.

It carries out the reaction UTP + L-glutamine + ATP + H2O = CTP + L-glutamate + ADP + phosphate + 2 H(+). The enzyme catalyses L-glutamine + H2O = L-glutamate + NH4(+). It catalyses the reaction UTP + NH4(+) + ATP = CTP + ADP + phosphate + 2 H(+). Its pathway is pyrimidine metabolism; CTP biosynthesis via de novo pathway; CTP from UDP: step 2/2. Its activity is regulated as follows. Allosterically activated by GTP, when glutamine is the substrate; GTP has no effect on the reaction when ammonia is the substrate. The allosteric effector GTP functions by stabilizing the protein conformation that binds the tetrahedral intermediate(s) formed during glutamine hydrolysis. Inhibited by the product CTP, via allosteric rather than competitive inhibition. Functionally, catalyzes the ATP-dependent amination of UTP to CTP with either L-glutamine or ammonia as the source of nitrogen. Regulates intracellular CTP levels through interactions with the four ribonucleotide triphosphates. The polypeptide is CTP synthase (Sodalis glossinidius (strain morsitans)).